The primary structure comprises 829 residues: Ectonucleotide pyrophosphatase/phosphodiesterase C27A7.1 (829 aa).

A helical; Signal-anchor for type II membrane protein membrane pass occupies residues 54 to 74 (VIGIAVLLLAMVVIVVIVLLL). Catalysis depends on Thr-224, which acts as the Nucleophile. Asn-296, Asn-424, Asn-514, Asn-542, Asn-582, Asn-649, Asn-733, and Asn-748 each carry an N-linked (GlcNAc...) asparagine glycan. The cysteines at positions 439 and 782 are disulfide-linked.

It belongs to the nucleotide pyrophosphatase/phosphodiesterase family.

It is found in the membrane. Functionally, probable phosphodiesterase. This Caenorhabditis elegans protein is Ectonucleotide pyrophosphatase/phosphodiesterase C27A7.1.